Consider the following 274-residue polypeptide: 3',5'-cyclic adenosine monophosphate phosphodiesterase CpdA (274 aa).

The Fe cation site is built by Asp-21, His-23, Asp-63, Asn-93, His-163, His-202, and His-204. AMP-binding positions include His-23, Asp-63, and 93–94 (NH). Residue His-204 coordinates AMP.

Belongs to the cyclic nucleotide phosphodiesterase class-III family. Fe(2+) serves as cofactor.

The enzyme catalyses 3',5'-cyclic AMP + H2O = AMP + H(+). In terms of biological role, hydrolyzes cAMP to 5'-AMP. Plays an important regulatory role in modulating the intracellular concentration of cAMP, thereby influencing cAMP-dependent processes. May coordinate responses to nutritional stress, ensuring optimal competence development. This chain is 3',5'-cyclic adenosine monophosphate phosphodiesterase CpdA, found in Haemophilus influenzae (strain ATCC 51907 / DSM 11121 / KW20 / Rd).